Consider the following 463-residue polypeptide: L-seryl-tRNA(Sec) selenium transferase (463 aa).

Residue K295 is modified to N6-(pyridoxal phosphate)lysine.

It belongs to the SelA family. In terms of assembly, homodecamer; pentamer of dimers. Binds only one seryl-tRNA(Sec) per dimer. Requires pyridoxal 5'-phosphate as cofactor.

Its subcellular location is the cytoplasm. The enzyme catalyses L-seryl-tRNA(Sec) + selenophosphate + H(+) = L-selenocysteinyl-tRNA(Sec) + phosphate. It functions in the pathway aminoacyl-tRNA biosynthesis; selenocysteinyl-tRNA(Sec) biosynthesis; selenocysteinyl-tRNA(Sec) from L-seryl-tRNA(Sec) (bacterial route): step 1/1. Functionally, converts seryl-tRNA(Sec) to selenocysteinyl-tRNA(Sec) required for selenoprotein biosynthesis. The protein is L-seryl-tRNA(Sec) selenium transferase of Escherichia coli (strain K12 / MC4100 / BW2952).